Reading from the N-terminus, the 855-residue chain is Nuclear valosin-containing protein-like (855 aa).

Residues 1 to 219 form an interaction with RPL5 region; that stretch reads MKPRPGVFVD…SLLESDKKRK (219 aa). Residues 49-52 carry the Nucleolar localization signal motif; it reads RRKR. At K70 the chain carries N6-acetyllysine. A disordered region spans residues 83 to 234; the sequence is LAKRARQDEE…KGNKRKTENL (152 aa). A Nuclear localization signal motif is present at residues 85–88; that stretch reads KRAR. The span at 90–110 shows a compositional bias: acidic residues; sequence DEEDEYTESYSDDDSNMEDYP. Composition is skewed to polar residues over residues 113–123 and 131–157; these read QSANPMNSSLL and SESV…SKTG. A Phosphoserine modification is found at S133. At T137 the chain carries Phosphothreonine. At K155 the chain carries N6-acetyllysine. S190 is subject to Phosphoserine. A Glycyl lysine isopeptide (Lys-Gly) (interchain with G-Cter in SUMO2) cross-link involves residue K207. Phosphoserine is present on residues S210 and S214. The segment covering 217 to 228 has biased composition (basic residues); that stretch reads KRKGRAKGKGNK. The short motif at 217–231 is the Nuclear localization signal element; sequence KRKGRAKGKGNKRKT. The interaction with WDR74 stretch occupies residues 266–473; sequence VGGNDATLKE…LTPGFVGADL (208 aa). 304 to 311 lines the ATP pocket; it reads GPPGCGKT. The interval 496 to 523 is disordered; it reads QKKKPEIEGLPSEGDQEERLGAEPTSET. Residue 621 to 628 coordinates ATP; sequence GPPGCGKT.

The protein belongs to the AAA ATPase family. Interacts with NCL/nucleolin. Isoform 1 and isoform 2 interact with TERT and isoform 1 exhibits a higher binding affinity for TERT compared to isoform 2. Isoform 1 interacts with MTREX in an ATP-dependent manner; the interaction is required to associate NVL with nuclear RNA exosome. Isoform 1 interacts with RPL5 in an ATP-dependent manner. Interacts with WDR74 (through WDR repeats); the interaction is independent of RNA or pre-60S ribosome particles.

Its subcellular location is the nucleus. The protein resides in the nucleolus. It is found in the nucleoplasm. Functionally, participates in the assembly of the telomerase holoenzyme and effecting of telomerase activity via its interaction with TERT. Involved in both early and late stages of the pre-rRNA processing pathways. Spatiotemporally regulates 60S ribosomal subunit biogenesis in the nucleolus. Catalyzes the release of specific assembly factors, such as WDR74, from pre-60S ribosomal particles through the ATPase activity. This is Nuclear valosin-containing protein-like from Mus musculus (Mouse).